Here is a 69-residue protein sequence, read N- to C-terminus: UPF0291 protein CD630_10710 (69 aa).

This sequence belongs to the UPF0291 family.

The protein localises to the cytoplasm. This chain is UPF0291 protein CD630_10710, found in Clostridioides difficile (strain 630) (Peptoclostridium difficile).